The chain runs to 161 residues: Large ribosomal subunit protein bL9 (161 aa).

The protein belongs to the bacterial ribosomal protein bL9 family.

Functionally, binds to the 23S rRNA. In Blochmanniella floridana, this protein is Large ribosomal subunit protein bL9.